A 373-amino-acid chain; its full sequence is 3 beta-hydroxysteroid dehydrogenase/Delta 5--&gt;4-isomerase (373 aa).

The active-site Proton acceptor is Y155. K159 lines the NAD(+) pocket. The helical transmembrane segment at 288–308 (ISLQYWLAFLLEIVSFLLSPI) threads the bilayer.

Belongs to the 3-beta-HSD family.

It localises to the endoplasmic reticulum membrane. The protein resides in the mitochondrion membrane. It carries out the reaction a 3beta-hydroxy-Delta(5)-steroid + NAD(+) = a 3-oxo-Delta(5)-steroid + NADH + H(+). It catalyses the reaction a 3-oxo-Delta(5)-steroid = a 3-oxo-Delta(4)-steroid. The protein operates within lipid metabolism; steroid biosynthesis. Its function is as follows. 3-beta-HSD is a bifunctional enzyme, that catalyzes the oxidative conversion of Delta(5)-ene-3-beta-hydroxy steroid, and the oxidative conversion of ketosteroids. The 3-beta-HSD enzymatic system plays a crucial role in the biosynthesis of all classes of hormonal steroids. The protein is 3 beta-hydroxysteroid dehydrogenase/Delta 5--&gt;4-isomerase (HSD3B) of Bos taurus (Bovine).